A 348-amino-acid chain; its full sequence is Protein RecA (348 aa).

Position 65 to 72 (65 to 72) interacts with ATP; it reads GPESSGKT.

The protein belongs to the RecA family.

It localises to the cytoplasm. Can catalyze the hydrolysis of ATP in the presence of single-stranded DNA, the ATP-dependent uptake of single-stranded DNA by duplex DNA, and the ATP-dependent hybridization of homologous single-stranded DNAs. It interacts with LexA causing its activation and leading to its autocatalytic cleavage. This is Protein RecA from Enterococcus faecalis (strain ATCC 700802 / V583).